We begin with the raw amino-acid sequence, 1105 residues long: Lysylphosphatidylglycerol biosynthesis bifunctional protein LysX (1105 aa).

The tract at residues 1-603 is phosphatidylglycerol lysyltransferase; sequence MTVTKPRSVQ…LLHHDGSAPD (603 aa). A run of 7 helical transmembrane segments spans residues 20-40, 62-82, 86-106, 117-137, 154-174, 186-203, and 208-228; these read VPAAAGWAVGVIATLSLLASI, FPDTSFAWSFVLALLAAALAA, IAWLLLLTNVVLAAFLNAADI, FGENLGFEVHVVAIVVLVLGY, AVLVAGGAIGILVSWGLVDLF, YVANRVIGFALADPDLFT, and VFLNAMFGLFGALALIAATIV. The interval 604–1105 is lysine--tRNA ligase; the sequence is VSGLRQSAIA…TLPFPLAKPH (502 aa). Mg(2+)-binding residues include Asp-1017 and Glu-1024.

In the N-terminal section; belongs to the LPG synthetase family. It in the C-terminal section; belongs to the class-II aminoacyl-tRNA synthetase family. Requires Mg(2+) as cofactor.

The protein resides in the cell membrane. The catalysed reaction is tRNA(Lys) + L-lysine + ATP = L-lysyl-tRNA(Lys) + AMP + diphosphate. It carries out the reaction L-lysyl-tRNA(Lys) + a 1,2-diacyl-sn-glycero-3-phospho-(1'-sn-glycerol) = a 1,2-diacyl-sn-glycero-3-phospho-1'-(3'-O-L-lysyl)-sn-glycerol + tRNA(Lys). Functionally, catalyzes the production of L-lysyl-tRNA(Lys)transfer and the transfer of a lysyl group from L-lysyl-tRNA(Lys) to membrane-bound phosphatidylglycerol (PG), which produces lysylphosphatidylglycerol (LPG), one of the components of the bacterial membrane with a positive net charge. LPG synthesis contributes to the resistance to cationic antimicrobial peptides (CAMPs) and likely protects M.tuberculosis against the CAMPs produced by competiting microorganisms (bacteriocins). In fact, the modification of anionic phosphatidylglycerol with positively charged L-lysine results in repulsion of the peptides. This is Lysylphosphatidylglycerol biosynthesis bifunctional protein LysX (lysX) from Mycobacterium ulcerans (strain Agy99).